We begin with the raw amino-acid sequence, 443 residues long: Probable glycine dehydrogenase (decarboxylating) subunit 1 (443 aa).

The protein belongs to the GcvP family. N-terminal subunit subfamily. In terms of assembly, the glycine cleavage system is composed of four proteins: P, T, L and H. In this organism, the P 'protein' is a heterodimer of two subunits.

The enzyme catalyses N(6)-[(R)-lipoyl]-L-lysyl-[glycine-cleavage complex H protein] + glycine + H(+) = N(6)-[(R)-S(8)-aminomethyldihydrolipoyl]-L-lysyl-[glycine-cleavage complex H protein] + CO2. Its function is as follows. The glycine cleavage system catalyzes the degradation of glycine. The P protein binds the alpha-amino group of glycine through its pyridoxal phosphate cofactor; CO(2) is released and the remaining methylamine moiety is then transferred to the lipoamide cofactor of the H protein. The sequence is that of Probable glycine dehydrogenase (decarboxylating) subunit 1 from Chloroherpeton thalassium (strain ATCC 35110 / GB-78).